The primary structure comprises 929 residues: SCY1-like protein 2 (929 aa).

The Protein kinase domain maps to 32 to 327; that stretch reads FDVGRHIASG…ADQMTKIPFF (296 aa). The stretch at 443-479 is one HEAT repeat; sequence DEIKNSVLPMVYRALEAPSIQIQELCLNIIPTFANLI. Residues 661-701 are a coiled coil; the sequence is ESENKEDGLQNKHKRASLTLEEKQKLAKEQEQAQKLKSQQP. Ser677 carries the post-translational modification Phosphoserine. Over residues 684–694 the composition is skewed to basic and acidic residues; it reads QKLAKEQEQAQ. Disordered regions lie at residues 684-709 and 906-929; these read QKLA…VHTP and NFAQ…DLFG. The segment covering 695 to 705 has biased composition (low complexity); that stretch reads KLKSQQPLKPQ. Residues 699–929 are necessary for interaction with AP2 complex and clathrin, interaction with clathrin is necessary for its targeting to the TGN and endosomal membranes; sequence QQPLKPQVHT…ASNDLKDLFG (231 aa). Thr708 carries the post-translational modification Phosphothreonine. Positions 912–922 are enriched in polar residues; the sequence is TTMTNSSSASN.

The protein belongs to the protein kinase superfamily. Interacts with clathrin and AP2B1; the interaction mediates the association with the AP-2 complex. Post-translationally, could autophosphorylate in presence of poly-L-lysine.

The protein localises to the cytoplasmic vesicle. The protein resides in the clathrin-coated vesicle. It localises to the golgi apparatus. Its subcellular location is the trans-Golgi network membrane. It is found in the endosome membrane. In terms of biological role, component of the AP2-containing clathrin coat that may regulate clathrin-dependent trafficking at plasma membrane, TGN and endosomal system. A possible serine/threonine-protein kinase toward the beta2-subunit of the plasma membrane adapter complex AP2 and other proteins in presence of poly-L-lysine has not been confirmed. By regulating the expression of excitatory receptors at synapses, plays an essential role in neuronal function and signaling and in brain development. This is SCY1-like protein 2 from Homo sapiens (Human).